The following is a 153-amino-acid chain: Nuclear cap-binding protein subunit 2 (153 aa).

Residues tyrosine 17, tyrosine 40, 109-113 (RTDWD), 120-124 (RQYGR), and 130-131 (QV) each bind mRNA. The RRM domain occupies 37–115 (CTLYVGNLSF…RIIRTDWDAG (79 aa)).

This sequence belongs to the RRM NCBP2 family. In terms of assembly, component of the nuclear cap-binding complex (CBC), a heterodimer composed of ncbp1/cbp80 and ncbp2/cbp20 that interacts with m7GpppG-capped RNA.

It localises to the nucleus. The protein localises to the cytoplasm. In terms of biological role, component of the cap-binding complex (CBC), which binds co-transcriptionally to the 5' cap of pre-mRNAs and is involved in various processes such as pre-mRNA splicing, translation regulation, nonsense-mediated mRNA decay, RNA-mediated gene silencing (RNAi) by microRNAs (miRNAs) and mRNA export. The CBC complex is involved in mRNA export from the nucleus, leading to the recruitment of the mRNA export machinery to the 5' end of mRNA and to mRNA export in a 5' to 3' direction through the nuclear pore. The CBC complex is also involved in mediating U snRNA and intronless mRNAs export from the nucleus. The CBC complex is essential for a pioneer round of mRNA translation, before steady state translation when the CBC complex is replaced by cytoplasmic cap-binding protein eIF4E. The pioneer round of mRNA translation mediated by the CBC complex plays a central role in nonsense-mediated mRNA decay (NMD), NMD only taking place in mRNAs bound to the CBC complex, but not on eIF4E-bound mRNAs. The CBC complex enhances NMD in mRNAs containing at least one exon-junction complex (EJC), promoting the interaction between upf1 and upf2. The CBC complex is also involved in 'failsafe' NMD, which is independent of the EJC complex, while it does not participate in Staufen-mediated mRNA decay (SMD). During cell proliferation, the CBC complex is also involved in microRNAs (miRNAs) biogenesis via its interaction with srrt/ars2, thereby being required for miRNA-mediated RNA interference. The CBC complex also acts as a negative regulator of parn, thereby acting as an inhibitor of mRNA deadenylation. In the CBC complex, ncbp2/cbp20 recognizes and binds capped RNAs (m7GpppG-capped RNA) but requires ncbp1/cbp80 to stabilize the movement of its N-terminal loop and lock the CBC into a high affinity cap-binding state with the cap structure. The conventional cap-binding complex with NCBP2 binds both small nuclear RNA (snRNA) and messenger (mRNA) and is involved in their export from the nucleus. The sequence is that of Nuclear cap-binding protein subunit 2 (ncbp2) from Xenopus tropicalis (Western clawed frog).